We begin with the raw amino-acid sequence, 712 residues long: Polyribonucleotide nucleotidyltransferase (712 aa).

Residues Asp-487 and Asp-493 each coordinate Mg(2+). A KH domain is found at Pro-554 to Ile-613. The region spanning Gly-623 to Lys-691 is the S1 motif domain.

The protein belongs to the polyribonucleotide nucleotidyltransferase family. The cofactor is Mg(2+).

The protein resides in the cytoplasm. The catalysed reaction is RNA(n+1) + phosphate = RNA(n) + a ribonucleoside 5'-diphosphate. Involved in mRNA degradation. Catalyzes the phosphorolysis of single-stranded polyribonucleotides processively in the 3'- to 5'-direction. This Rhizobium johnstonii (strain DSM 114642 / LMG 32736 / 3841) (Rhizobium leguminosarum bv. viciae) protein is Polyribonucleotide nucleotidyltransferase.